The chain runs to 1247 residues: Nidogen-1 (1247 aa).

A signal peptide spans 1–28; it reads MLASSSRIRAAWTRALLLPLLLAGPVGC. Residues 106-268 enclose the NIDO domain; sequence PFLADLDTTD…GVWVFEIGSP (163 aa). A sulfotyrosine mark is found at Y289 and Y296. The EGF-like 1 domain occupies 386–426; it reads SRQTCANNRHQCSVHAECRDYATGFCCSCVAGYTGNGRQCV. Disulfide bonds link C390–C403, C397–C412, C411–C618, C414–C425, C672–C685, C679–C695, C697–C708, C714–C727, C721–C736, C738–C750, C762–C777, C769–C787, C789–C800, C806–C817, C811–C826, C828–C839, C849–C878, C889–C896, and C898–C919. The region spanning 430–667 is the Nidogen G2 beta-barrel domain; sequence SPQRVNGKVK…GPVREGSPDA (238 aa). An EGF-like 2 domain is found at 668–709; sequence LQNPCYIGTHGCDTNAACRPGPRTQFTCECSIGFRGDGRTCY. A Cell attachment site motif is present at residues 702-704; sequence RGD. Residues 710-751 form the EGF-like 3; calcium-binding domain; sequence DIDECSEQPSVCGSHTICNNHPGTFRCECVEGYQFSDEGTCV. The EGF-like 4 domain occupies 758 to 801; the sequence is PINYCETGLHNCDIPQRAQCIYTGGSSYTCSCLPGFSGDGQACQ. In terms of domain architecture, EGF-like 5; calcium-binding spans 802 to 840; that stretch reads DVDECQPSRCHPDAFCYNTPGSFTCQCKPGYQGDGFRCV. The region spanning 846–919 is the Thyroglobulin type-1 domain; the sequence is KTRCQHEREH…RTRPGMTPPC (74 aa). Residues T922 and T935 are each glycosylated (O-linked (GalNAc...) threonine). LDL-receptor class B repeat units follow at residues 990–1032, 1033–1075, 1076–1120, and 1121–1162; these read KMVY…DHLG, RNIF…DSVR, GNLY…DAFS, and SQLC…YGKN. An EGF-like 6 domain is found at 1208-1244; it reads GHNYCSVNNGGCTHLCLATPGSRTCRCPDNTLGVDCI. 3 cysteine pairs are disulfide-bonded: C1212-C1223, C1219-C1232, and C1234-C1243.

Interacts with FBLN1. Interacts with LGALS3BP. Interacts with PLXDC1. Interacts with SVEP1. Post-translationally, N- and O-glycosylated.

The protein localises to the secreted. The protein resides in the extracellular space. It localises to the extracellular matrix. It is found in the basement membrane. Its function is as follows. Sulfated glycoprotein widely distributed in basement membranes and tightly associated with laminin. Also binds to collagen IV and perlecan. It probably has a role in cell-extracellular matrix interactions. The protein is Nidogen-1 (NID1) of Homo sapiens (Human).